A 160-amino-acid chain; its full sequence is MSAKKIVLKSSDGESFEVEEAVALESQTIAHMVEDDCVDNGVPLPNVTSKILAKVIEYCKRHVEAAASKAEAVEGAATSDDDLKAWDADFMKIDQATLFELILAANYLNIKNLLDLTCQTVADMIKGKTPEEIRTTFNIKNDFTPEEEEEVRRENQWAFE.

The tract at residues Ile102–Glu160 is interaction with the F-box domain of F-box proteins.

Belongs to the SKP1 family. In terms of assembly, part of a SCF E3 ubiquitin ligase complex composed of SKP1, CUL1, RBX1 (RBX1A or RBX1B) and F-box proteins. Interacts with SKIP1, SKIP2, SKIP3, SKIP4, SKIP6, FIB1/SKIP7, SKIP8, PP2A11/SKIP10, SKIP11, PP2B11/SKIP12, PP2A14/SKIP13, SKIP14, SKIP15, SKIP16, SKIP19/FBL20, SKIP20, PP2B1/SKIP21, SKIP22, SKIP23, SKIP24, SKIP25, TULP10/SKIP26, SKIP27, SKIP28/MEE11, AFR/SKIP29, SKIP30, SKIP31, SKIP32/FBP7, SKIP33, SKIP35, ADO1/ZTL, ADO2/LKP2, ADO3/FKF1, AFR, COI1, DOR, EBF1, EBF2, EID1, ORE9, PP2A13/SKIP9, TIR1, UFO, SKP2A, CPR1/CPR30, FBL17, NUP58, At1g55000, At1g67340, At1g78100, At3g04660, At3g61590, At4g38940 and At5g49610. The SKP1A subunit of the SCF E3 ubiquitin ligase complex can interact directly with KIN10, KIN11 and the proteasome subunit PAD1. This interaction can be disrupted by PRL1. In case of polerovirus infection, part of a SCF P0 complex composed of the viral silencing suppressor P0, SKP1 and CUL1. Interacts with turnip yellows virus P0. Interacts with VBF and Agrobacterium virF. Binds to KIB1. As to expression, accumulates only in meristematic cells. Expressed in inflorescence, shoot and root apical meristems, as well as in developing organs such as gametocytes and seeds. Also detected in cortical layer and epidermis of roots, leaves, pith and vascular bundle of young stem, young floral buds and organ primordia, pollen and through the valve of siliques. Not detectable in mature root tissues.

The protein resides in the nucleus. It localises to the cytoplasm. The protein localises to the cytoskeleton. It is found in the spindle. Its subcellular location is the phragmoplast. It functions in the pathway protein modification; protein ubiquitination. Functionally, involved in ubiquitination and subsequent proteasomal degradation of target proteins. Together with CUL1, RBX1 and a F-box protein, it forms a SCF E3 ubiquitin ligase complex. The functional specificity of this complex depends on the type of F-box protein. In the SCF complex, it serves as an adapter that links the F-box protein to CUL1. SCF(UFO) is required for vegetative and floral organ development as well as for male gametogenesis. SCF(TIR1) is involved in auxin signaling pathway. SCF(COI1) regulates responses to jasmonates. SCF(EID1) and SCF(AFR) are implicated in phytochrome A light signaling. SCF(ADO1), SCF(ADO2), SCF(ADO3) are related to the circadian clock. SCF(ORE9) seems to be involved in senescence. SCF(EBF1/EBF2) may regulate ethylene signaling. Plays a role during embryogenesis and early postembryonic development, especially during cell elongation and division. Contributes to the correct chromosome segregation during tetrad formation. The polypeptide is SKP1-like protein 1A (Arabidopsis thaliana (Mouse-ear cress)).